Consider the following 240-residue polypeptide: MGKTQSLPILITGGGRRIGLALAWHFINQKQPVIVSYRTHYPAIDGLIKAGAQCIQADFSTNDGVMAFADEVLKSTHGLRAILHNASAWMAEKPGAPLTDVLACMMQIHVNTPYLLNHALERLLRGHGHAASDIIHFTDYVVERGSDKHIAYAASKAALDNMTRSFARKLAPEVKVNSIAPSLILFNEHDDAEYRQQALNKSLMKTAPGEKEVIDLVDYLLTSCFVTGRSLPLDGGRHLR.

Y152 (proton acceptor) is an active-site residue.

It belongs to the short-chain dehydrogenases/reductases (SDR) family. FolM subfamily.

The catalysed reaction is (6S)-5,6,7,8-tetrahydrofolate + NADP(+) = 7,8-dihydrofolate + NADPH + H(+). It catalyses the reaction 7,8-dihydromonapterin + NADPH + H(+) = 5,6,7,8-tetrahydromonapterin + NADP(+). In terms of biological role, catalyzes the reduction of dihydromonapterin to tetrahydromonapterin. Also has lower activity with dihydrofolate. The chain is Dihydromonapterin reductase (folM) from Escherichia coli O6:H1 (strain CFT073 / ATCC 700928 / UPEC).